Consider the following 193-residue polypeptide: Cerebellin-1 (193 aa).

Positions 1–21 (MLGVLELLLLGAAWLAGPARG) are cleaved as a signal peptide. A glycan (N-linked (GlcNAc...) asparagine) is linked at N23. An essential for interaction with NRXN1 and linker of two C1q trimers into disulfide-linked hexamers region spans residues 34-38 (CLVVC). The region spanning 57–193 (SGSAKVAFSA…TFSGFLVFPL (137 aa)) is the C1q domain. The interval 62 to 193 (VAFSAIRSTN…TFSGFLVFPL (132 aa)) is necessary for interaction with CBLN3, and homotrimerization. N79 carries N-linked (GlcNAc...) asparagine glycosylation. An essential for interaction with GRID2 region spans residues 122 to 147 (YNRQTIQVSLMLNGWPVISAFAGDQD).

Homohexamer; disulfide-linked homotrimers. The trimers associate via N-terminal cysteine residues to form disulfide-linked hexamers. May form oligomers with CBLN2, CBLN3 AND CBLN4 prior to secretion. Once secreted, does not interact with other CBLN family members. Interacts with GRID1. Interacts with NRXN1 and NRXN2 long (alpha) and short (beta) isoforms produced by alternative promoter usage. Competes with NLGN1 for NRXN1-binding. Weakly interacts with NRXN3 short isoform and not at all with NRXN3 long isoform. Interacts (via C1q domain) with GRID2; GRID2-binding is calcium-independent; CBLN1 hexamers anchor GRID2 N-terminal domain dimers to monomeric NRXN1 isoform beta; promotes synaptogenesis and mediates the D-Serine-dependent long term depression signals and AMPA receptor endocytosis. Interacts with OTOL1. In terms of processing, the proteolytic processing to yield cerebellin seems to occur either prior to the secretion by presynaptic neurons and subsequent oligomerization or in some other location after release of the mature protein. Sialoglycoprotein. As to expression, in the Purkinje cells postsynaptic structures. In the cerebellum, cerebellin is much less abundant than [des-Ser1]-cerebellin.

It localises to the secreted. Its subcellular location is the postsynaptic cell membrane. Functionally, required for synapse integrity and synaptic plasticity. During cerebellar synapse formation, essential for the matching and maintenance of pre- and post-synaptic elements at parallel fiber-Purkinje cell synapses, the establishment of the proper pattern of climbing fiber-Purkinje cell innervation, and induction of long-term depression at parallel fiber-Purkinje cell synapses. Plays a role as a synaptic organizer that acts bidirectionally on both pre- and post-synaptic components. On the one hand induces accumulation of synaptic vesicles in the pre-synaptic part by binding with NRXN1 and in other hand induces clustering of GRID2 and its associated proteins at the post-synaptic site through association of GRID2. NRXN1-CBLN1-GRID2 complex directly induces parallel fiber protrusions that encapsulate spines of Purkinje cells leading to accumulation of GRID2 and synaptic vesicles. Required for CBLN3 export from the endoplasmic reticulum and secretion. NRXN1-CBLN1-GRID2 complex mediates the D-Serine-dependent long term depression signals and AMPA receptor endocytosis. Essential for long-term maintenance but not establishment of excitatory synapses. Inhibits the formation and function of inhibitory GABAergic synapses in cerebellar Purkinje cells. Its function is as follows. The cerebellin peptide exerts neuromodulatory functions. Directly stimulates norepinephrine release via the adenylate cyclase/PKA-dependent signaling pathway; and indirectly enhances adrenocortical secretion in vivo, through a paracrine mechanism involving medullary catecholamine release. The sequence is that of Cerebellin-1 (CBLN1) from Homo sapiens (Human).